The sequence spans 135 residues: Protein cornichon homolog 1 (135 aa).

3 helical membrane-spanning segments follow: residues 2 to 22 (VFVWLTAFFLVVALIVLVIYQ), 51 to 71 (FVLQAALSVLFLLSGHWAMFL), and 111 to 131 (IVGLIILLFLSLFWMIWTVLL).

The protein belongs to the cornichon family. As to quaternary structure, interacts with HKT1;3.

It localises to the endoplasmic reticulum membrane. The protein resides in the golgi apparatus membrane. Its function is as follows. Acts as a cargo receptor necessary for the transportation of the cation transporter HKT1;3 and possibly other secretory proteins from the endoplasmic reticulum (ER) in COPII-coated vesicles targeted to the Golgi apparatus. The protein is Protein cornichon homolog 1 of Oryza sativa subsp. japonica (Rice).